The chain runs to 223 residues: MAMLFRPPPSQCRSFSPFVFNYSSREVSSSSRLSLKTSGDEENWVSRFRSKSLSLVFSGALALGLSLSGVGFADAKVGVNKPELLPKEFTSVIDVADFLSNGQEKRIAQEIANLEKDTGFKLRVLAQNYPVTPGLAIKDFWQVDDSTIVFVADPTFGNILNFNVGATVDLDIPRSFWSRLAGKYGNMFYWKEKGEDASIEAAVMAISSCLREPVGRNNCAEIQ.

Its subcellular location is the plastid. It is found in the chloroplast thylakoid lumen. The polypeptide is Thylakoid lumenal 15.0 kDa protein 2, chloroplastic (Arabidopsis thaliana (Mouse-ear cress)).